A 140-amino-acid chain; its full sequence is Nucleoside diphosphate kinase (140 aa).

ATP is bound by residues Lys-9, Phe-57, Arg-85, Thr-91, Arg-102, and Asn-112. His-115 functions as the Pros-phosphohistidine intermediate in the catalytic mechanism.

Belongs to the NDK family. As to quaternary structure, homotetramer. The cofactor is Mg(2+).

The protein resides in the cytoplasm. It catalyses the reaction a 2'-deoxyribonucleoside 5'-diphosphate + ATP = a 2'-deoxyribonucleoside 5'-triphosphate + ADP. It carries out the reaction a ribonucleoside 5'-diphosphate + ATP = a ribonucleoside 5'-triphosphate + ADP. In terms of biological role, major role in the synthesis of nucleoside triphosphates other than ATP. The ATP gamma phosphate is transferred to the NDP beta phosphate via a ping-pong mechanism, using a phosphorylated active-site intermediate. The protein is Nucleoside diphosphate kinase of Chlorobaculum tepidum (strain ATCC 49652 / DSM 12025 / NBRC 103806 / TLS) (Chlorobium tepidum).